The following is a 405-amino-acid chain: Serine/threonine transporter SstT (405 aa).

8 consecutive transmembrane segments (helical) span residues 13-33 (GGSL…LAGF), 43-63 (FLGD…VFVL), 82-102 (IILL…LMSF), 141-161 (ALIN…GIAL), 185-205 (FVIC…IAQT), 217-237 (LGVL…LIVF), 298-318 (MAGA…TLGI), and 339-359 (ASGV…LFGI).

The protein belongs to the dicarboxylate/amino acid:cation symporter (DAACS) (TC 2.A.23) family.

Its subcellular location is the cell inner membrane. The enzyme catalyses L-serine(in) + Na(+)(in) = L-serine(out) + Na(+)(out). It carries out the reaction L-threonine(in) + Na(+)(in) = L-threonine(out) + Na(+)(out). In terms of biological role, involved in the import of serine and threonine into the cell, with the concomitant import of sodium (symport system). The polypeptide is Serine/threonine transporter SstT (Shewanella amazonensis (strain ATCC BAA-1098 / SB2B)).